A 195-amino-acid chain; its full sequence is Ureidoglycolate lyase (195 aa).

Belongs to the ureidoglycolate lyase family. Homodimer.

It catalyses the reaction (S)-ureidoglycolate = urea + glyoxylate. Its pathway is nitrogen metabolism; (S)-allantoin degradation. Catalyzes the catabolism of the allantoin degradation intermediate (S)-ureidoglycolate, generating urea and glyoxylate. Involved in the utilization of allantoin as secondary nitrogen source when primary sources are limiting. This is Ureidoglycolate lyase (DAL3) from Saccharomyces cerevisiae (strain ATCC 204508 / S288c) (Baker's yeast).